The sequence spans 344 residues: Inositol 2-dehydrogenase/D-chiro-inositol 3-dehydrogenase (344 aa).

It belongs to the Gfo/Idh/MocA family. As to quaternary structure, homotetramer.

The enzyme catalyses myo-inositol + NAD(+) = scyllo-inosose + NADH + H(+). It carries out the reaction 1D-chiro-inositol + NAD(+) = scyllo-inosine + NADH + H(+). It functions in the pathway polyol metabolism; myo-inositol degradation into acetyl-CoA; acetyl-CoA from myo-inositol: step 1/7. Involved in the oxidation of myo-inositol (MI) and D-chiro-inositol (DCI) to 2-keto-myo-inositol (2KMI or 2-inosose) and 1-keto-D-chiro-inositol (1KDCI), respectively. Can also use D-glucose and D-xylose, and shows a trace of activity with D-ribose and D-fructose. The protein is Inositol 2-dehydrogenase/D-chiro-inositol 3-dehydrogenase (iolG) of Bacillus subtilis (strain 168).